A 79-amino-acid chain; its full sequence is UPF0291 protein SAV1341 (79 aa).

Positions 56-79 (IDPEGNDVTPEKIKEIQQKRDNKN) are disordered. Residues 64–79 (TPEKIKEIQQKRDNKN) show a composition bias toward basic and acidic residues.

The protein belongs to the UPF0291 family.

It is found in the cytoplasm. This is UPF0291 protein SAV1341 from Staphylococcus aureus (strain Mu50 / ATCC 700699).